The chain runs to 245 residues: Transcription factor FUP7 (245 aa).

Positions 10–37 form a DNA-binding region, zn(2)-C6 fungal-type; it reads CKTCRSRKQKCDGIRPACSRCRSLGLQC. The interval 162–216 is disordered; it reads ESSSGNADYQHEDEVQSPAGAGDDMAVGDPYRDDSVDQDSIGQPPQRTESVGNMQ. A compositionally biased stretch (polar residues) spans 199–214; the sequence is QDSIGQPPQRTESVGN.

It localises to the nucleus. Transcription factor; part of the gene cluster that mediates the biosynthesis of the mycotoxin fusaproliferin (FUP) that belongs to the class of bicyclic sesterterpenoids. The protein is Transcription factor FUP7 of Fusarium proliferatum (strain ET1) (Orchid endophyte fungus).